The chain runs to 271 residues: Protein FANTASTIC FOUR 1 (271 aa).

An FAF domain is found at 114–168 (NSFPPPLNSVNGFNNSRMVKSYKEDGRLVVQAIRVCSPPRCFVSERREGRLRLCL). Residues 174–255 (NSQDAEEEFE…KRRCNENGCE (82 aa)) form a disordered region. The segment covering 177 to 224 (DAEEEFEEEDEDDQYDAEEEEEEEEEEEEEEEEEEEEEEEEEEEDEEG) has biased composition (acidic residues). Residues 237-247 (GNKKVSNRPKR) show a composition bias toward basic residues.

Belongs to the fantastic four family. Expressed in the shoot apex, stamens, anthers and young siliques. Detected in provascular and vascular tissue.

In terms of biological role, able to repress WUS when constitutively overexpressed, but have no effect on CLV3. This Arabidopsis thaliana (Mouse-ear cress) protein is Protein FANTASTIC FOUR 1 (FAF1).